The chain runs to 712 residues: tRNA 5-methylaminomethyl-2-thiouridine biosynthesis bifunctional protein MnmC (712 aa).

Residues Met1 to Asp268 form a tRNA (mnm(5)s(2)U34)-methyltransferase region. The segment at Ile292–Leu712 is FAD-dependent cmnm(5)s(2)U34 oxidoreductase.

It in the N-terminal section; belongs to the methyltransferase superfamily. tRNA (mnm(5)s(2)U34)-methyltransferase family. In the C-terminal section; belongs to the DAO family. The cofactor is FAD.

The protein resides in the cytoplasm. The catalysed reaction is 5-aminomethyl-2-thiouridine(34) in tRNA + S-adenosyl-L-methionine = 5-methylaminomethyl-2-thiouridine(34) in tRNA + S-adenosyl-L-homocysteine + H(+). Its function is as follows. Catalyzes the last two steps in the biosynthesis of 5-methylaminomethyl-2-thiouridine (mnm(5)s(2)U) at the wobble position (U34) in tRNA. Catalyzes the FAD-dependent demodification of cmnm(5)s(2)U34 to nm(5)s(2)U34, followed by the transfer of a methyl group from S-adenosyl-L-methionine to nm(5)s(2)U34, to form mnm(5)s(2)U34. The protein is tRNA 5-methylaminomethyl-2-thiouridine biosynthesis bifunctional protein MnmC of Shewanella sediminis (strain HAW-EB3).